We begin with the raw amino-acid sequence, 722 residues long: Probable dipeptidyl-peptidase 5 (722 aa).

The first 18 residues, 1–18 (MGALRWLSLAAAASSALA), serve as a signal peptide directing secretion. Asn-75, Asn-78, Asn-86, Asn-94, Asn-151, Asn-253, and Asn-448 each carry an N-linked (GlcNAc...) asparagine glycan. Ser-558 acts as the Charge relay system in catalysis. A glycan (N-linked (GlcNAc...) asparagine) is linked at Asn-605. Catalysis depends on charge relay system residues Asp-641 and His-673.

The protein belongs to the peptidase S9C family.

It localises to the secreted. Its function is as follows. Extracellular dipeptidyl-peptidase which removes N-terminal dipeptides sequentially from polypeptides having unsubstituted N-termini. This chain is Probable dipeptidyl-peptidase 5 (dpp5), found in Emericella nidulans (strain FGSC A4 / ATCC 38163 / CBS 112.46 / NRRL 194 / M139) (Aspergillus nidulans).